A 53-amino-acid chain; its full sequence is Unknown protein from 2D-PAGE of needles (53 aa).

The sequence is that of Unknown protein from 2D-PAGE of needles from Pinus pinaster (Maritime pine).